The primary structure comprises 93 residues: Small ribosomal subunit protein bS20c (93 aa).

The protein belongs to the bacterial ribosomal protein bS20 family.

It is found in the plastid. The protein resides in the chloroplast. Its function is as follows. Binds directly to 16S ribosomal RNA. This chain is Small ribosomal subunit protein bS20c, found in Thalassiosira pseudonana (Marine diatom).